We begin with the raw amino-acid sequence, 270 residues long: MSDLHNESIFITGGGSGLGLALVERFIEEGAQVATLELSAAKVASLRQRFGEHILAVEGNVTCYADYQRAVDQILTRSGKLDCFIGNAGIWDHNASLVNTPAETLETGFHELFNVNVLGYLLGAKACAPALIASEGSMIFTLSNAAWYPGGGGPLYTTSKHAATGLIRQLAYELAPKVRVNGVGPCGMASDLRGPQALGQSETSIMQSLTPEKIAAILPLQFFPQPADFTGPYVMLASRRNNRALSGVMINADAGLAIRGIRHVAAGLDL.

10-34 is a binding site for NAD(+); the sequence is FITGGGSGLGLALVERFIEEGAQVA. Ser143 is a substrate binding site. Tyr156 (proton acceptor) is an active-site residue.

The protein belongs to the short-chain dehydrogenases/reductases (SDR) family.

The catalysed reaction is 3-(cis-5,6-dihydroxycyclohexa-1,3-dien-1-yl)propanoate + NAD(+) = 3-(2,3-dihydroxyphenyl)propanoate + NADH + H(+). It catalyses the reaction (2E)-3-(cis-5,6-dihydroxycyclohexa-1,3-dien-1-yl)prop-2-enoate + NAD(+) = (2E)-3-(2,3-dihydroxyphenyl)prop-2-enoate + NADH + H(+). It functions in the pathway aromatic compound metabolism; 3-phenylpropanoate degradation. Functionally, converts 3-phenylpropionate-dihydrodiol (PP-dihydrodiol) and cinnamic acid-dihydrodiol (CI-dihydrodiol) into 3-(2,3-dihydroxylphenyl)propanoic acid (DHPP) and 2,3-dihydroxicinnamic acid (DHCI), respectively. This chain is 3-phenylpropionate-dihydrodiol/cinnamic acid-dihydrodiol dehydrogenase, found in Shigella flexneri serotype 5b (strain 8401).